The chain runs to 834 residues: Probable glucan 1,3-beta-glucosidase D (834 aa).

Over residues Met-1–Thr-33 the composition is skewed to basic and acidic residues. Disordered stretches follow at residues Met-1 to Leu-188 and Gln-200 to Arg-251. Over Met-1 to Lys-306 the chain is Cytoplasmic. Residues Asp-34–Leu-45 show a composition bias toward acidic residues. Basic and acidic residues-rich tracts occupy residues Glu-46–Glu-76, Tyr-98–Ala-173, Tyr-201–Ala-218, and Val-228–Arg-245. A helical; Signal-anchor for type II membrane protein membrane pass occupies residues Trp-307–Val-327. Residues Ser-328–Tyr-834 are Extracellular-facing. The segment at His-331–Ser-354 is disordered. Residues Asn-333, Asn-379, Asn-384, Asn-396, Asn-549, Asn-561, and Asn-570 are each glycosylated (N-linked (GlcNAc...) asparagine). Glu-600 (proton donor) is an active-site residue. 3 N-linked (GlcNAc...) asparagine glycosylation sites follow: Asn-639, Asn-672, and Asn-692. Catalysis depends on Glu-705, which acts as the Nucleophile.

The protein belongs to the glycosyl hydrolase 5 (cellulase A) family.

Its subcellular location is the cell membrane. It carries out the reaction Successive hydrolysis of beta-D-glucose units from the non-reducing ends of (1-&gt;3)-beta-D-glucans, releasing alpha-glucose.. Its function is as follows. Glucosidase involved in the degradation of cellulosic biomass. Active on lichenan. This chain is Probable glucan 1,3-beta-glucosidase D (exgD), found in Neosartorya fischeri (strain ATCC 1020 / DSM 3700 / CBS 544.65 / FGSC A1164 / JCM 1740 / NRRL 181 / WB 181) (Aspergillus fischerianus).